The chain runs to 88 residues: Sec-independent protein translocase protein TatA (88 aa).

The chain crosses the membrane as a helical span at residues 4 to 24 (LSIWHWLIVLAVVLVLFVGGG). A disordered region spans residues 45–88 (ADDETMEGSTGSGGHIAPPGPAAGTVQRDASFSGTGRPSGSSTP). Positions 75–88 (SFSGTGRPSGSSTP) are enriched in low complexity.

It belongs to the TatA/E family. As to quaternary structure, the Tat system comprises two distinct complexes: a TatABC complex, containing multiple copies of TatA, TatB and TatC subunits, and a separate TatA complex, containing only TatA subunits. Substrates initially bind to the TatABC complex, which probably triggers association of the separate TatA complex to form the active translocon.

The protein localises to the cell inner membrane. In terms of biological role, part of the twin-arginine translocation (Tat) system that transports large folded proteins containing a characteristic twin-arginine motif in their signal peptide across membranes. TatA could form the protein-conducting channel of the Tat system. This Gluconacetobacter diazotrophicus (strain ATCC 49037 / DSM 5601 / CCUG 37298 / CIP 103539 / LMG 7603 / PAl5) protein is Sec-independent protein translocase protein TatA.